The chain runs to 469 residues: 3-isopropylmalate dehydratase large subunit (469 aa).

[4Fe-4S] cluster is bound by residues C350, C410, and C413.

The protein belongs to the aconitase/IPM isomerase family. LeuC type 1 subfamily. As to quaternary structure, heterodimer of LeuC and LeuD. [4Fe-4S] cluster is required as a cofactor.

The enzyme catalyses (2R,3S)-3-isopropylmalate = (2S)-2-isopropylmalate. Its pathway is amino-acid biosynthesis; L-leucine biosynthesis; L-leucine from 3-methyl-2-oxobutanoate: step 2/4. In terms of biological role, catalyzes the isomerization between 2-isopropylmalate and 3-isopropylmalate, via the formation of 2-isopropylmaleate. This Agrobacterium fabrum (strain C58 / ATCC 33970) (Agrobacterium tumefaciens (strain C58)) protein is 3-isopropylmalate dehydratase large subunit.